The primary structure comprises 298 residues: uncharacterized protein (298 aa).

An N-terminal signal peptide occupies residues 1 to 19; it reads MFRKFLFIQLLIVTSLVKA. The interval 278–298 is disordered; that stretch reads RNNPPLKNNNAKSKNSYETYK. Residues 279 to 298 show a composition bias toward low complexity; the sequence is NNPPLKNNNAKSKNSYETYK.

It to R.prowazekii RP296.

This is an uncharacterized protein from Rickettsia prowazekii (strain Madrid E).